Here is a 586-residue protein sequence, read N- to C-terminus: Protein BONZAI 2 (586 aa).

A lipid anchor (N-myristoyl glycine) is attached at Gly2. 2 C2 domains span residues 25–164 and 176–303; these read SAAT…ALEL and PQHN…NLAL. Residues Asp62, Asp68, Asp121, and Asp123 each contribute to the Ca(2+) site. The VWFA domain occupies 344–563; it reads NFMVAIDFTA…SVVEALLAEL (220 aa).

Belongs to the copine family. Interacts with BAP1 and BAP2. It depends on Ca(2+) as a cofactor. Expressed in roots, leaves and stems. Expressed in young growing tissues.

It is found in the cell membrane. Negative regulator of cell death and defense responses. May repress a number of R genes and may have effects in promoting growth and development. May function in membrane trafficking and in fusion of vesicles with plasma membrane. This is Protein BONZAI 2 (BON2) from Arabidopsis thaliana (Mouse-ear cress).